A 533-amino-acid polypeptide reads, in one-letter code: WD repeat-containing protein JIP5 (533 aa).

WD repeat units follow at residues 26-67 (NYSD…EKQS), 84-130 (GKVS…GSCR), 176-215 (NSND…GSKL), 264-309 (NQDD…FMDQ), and 372-409 (GAAD…EIAL). Acidic residues-rich tracts occupy residues 408–428 (ALDE…EDDL) and 437–452 (ASDE…EDEK). A disordered region spans residues 408-533 (ALDESDDSDD…EHGIRRFDDL (126 aa)). 2 stretches are compositionally biased toward basic and acidic residues: residues 453–463 (EDKPVKIDHPL) and 521–533 (QKHE…FDDL).

It belongs to the WD repeat WDR55 family.

The protein resides in the nucleus. The protein localises to the nucleolus. In Scheffersomyces stipitis (strain ATCC 58785 / CBS 6054 / NBRC 10063 / NRRL Y-11545) (Yeast), this protein is WD repeat-containing protein JIP5 (JIP5).